The sequence spans 279 residues: Urease accessory protein UreD (279 aa).

The protein belongs to the UreD family. UreD, UreF and UreG form a complex that acts as a GTP-hydrolysis-dependent molecular chaperone, activating the urease apoprotein by helping to assemble the nickel containing metallocenter of UreC. The UreE protein probably delivers the nickel.

The protein resides in the cytoplasm. Functionally, required for maturation of urease via the functional incorporation of the urease nickel metallocenter. The sequence is that of Urease accessory protein UreD from Pseudomonas fluorescens (strain ATCC BAA-477 / NRRL B-23932 / Pf-5).